Here is a 459-residue protein sequence, read N- to C-terminus: Cysteine--tRNA ligase (459 aa).

Residue Cys28 coordinates Zn(2+). The short motif at 30–40 (VTIYDLCHIGH) is the 'HIGH' region element. Residues Cys209, His234, and Glu238 each coordinate Zn(2+). The short motif at 266-270 (KMSKS) is the 'KMSKS' region element. Position 269 (Lys269) interacts with ATP.

The protein belongs to the class-I aminoacyl-tRNA synthetase family. Monomer. Zn(2+) serves as cofactor.

Its subcellular location is the cytoplasm. It carries out the reaction tRNA(Cys) + L-cysteine + ATP = L-cysteinyl-tRNA(Cys) + AMP + diphosphate. The sequence is that of Cysteine--tRNA ligase from Shewanella baltica (strain OS195).